The primary structure comprises 484 residues: CUGBP Elav-like family member 2 (484 aa).

2 necessary for nuclear export regions span residues 1–89 (MNGA…PGMH) and 90–178 (HPIQ…EGCS). RRM domains follow at residues 16–99 (IKTF…PADS), 108–188 (RKLF…FADT), and 399–477 (ANLF…LKRS). Positions 188 to 240 (TQKDKEQRRLQQQLAQQMQQLNTATWGNLTGLGGLTPQYLALLQQATSSSNLG) are necessary for splicing activity. Positions 347–399 (GLTNGTAGTMDALTQAYSGIQQYAAAALPTLYSQSLLQQQSAAGSQKEGPEGA) are necessary for nuclear localization. A necessary for nuclear localization and splicing activity region spans residues 426–484 (ISAKVFIDKQTNLSKCFGFVSYDNPVSAQAAIQAMNGFQIGMKRLKVQLKRSKNDSKPY).

Belongs to the CELF/BRUNOL family. Expressed in heart.

The protein resides in the nucleus. Its subcellular location is the cytoplasm. Its function is as follows. RNA-binding protein implicated in the regulation of several post-transcriptional events. May be involved in mRNA translation repression and stability. Mediates exon inclusion in TNNT2 pre-mRNA. The polypeptide is CUGBP Elav-like family member 2 (CELF2) (Gallus gallus (Chicken)).